The following is a 311-amino-acid chain: Protoheme IX farnesyltransferase (311 aa).

9 helical membrane-spanning segments follow: residues 32-52 (VMSL…VSIN), 53-73 (PWYG…AGVL), 104-124 (FVFG…FINW), 125-145 (FAAL…TIWL), 153-173 (IVIG…AATG), 180-200 (FLLF…LSLF), 224-244 (KQIL…FIID), 245-265 (FAGI…IYFA), and 290-310 (FYLA…YFII).

Belongs to the UbiA prenyltransferase family. Protoheme IX farnesyltransferase subfamily.

Its subcellular location is the cell inner membrane. It carries out the reaction heme b + (2E,6E)-farnesyl diphosphate + H2O = Fe(II)-heme o + diphosphate. It participates in porphyrin-containing compound metabolism; heme O biosynthesis; heme O from protoheme: step 1/1. In terms of biological role, converts heme B (protoheme IX) to heme O by substitution of the vinyl group on carbon 2 of heme B porphyrin ring with a hydroxyethyl farnesyl side group. The protein is Protoheme IX farnesyltransferase of Bartonella quintana (strain Toulouse) (Rochalimaea quintana).